The sequence spans 131 residues: Maturin (131 aa).

Y34 is subject to Phosphotyrosine. Residues 107-120 are compositionally biased toward acidic residues; it reads FEEYSADVEEEEPE. The interval 107–131 is disordered; that stretch reads FEEYSADVEEEEPEADHPQMGVSQQ.

This sequence belongs to the MTURN family. In terms of processing, phosphorylation at Tyr-34 is essential for its ability to promote megakaryocyte differentiation. As to expression, expressed in the thymus, bone marrow and spleen.

The protein localises to the cytoplasm. In terms of biological role, promotes megakaryocyte differentiation by enhancing ERK and JNK signaling as well as up-regulating RUNX1 and FLI1 expression. Represses NF-kappa-B transcriptional activity by inhibiting phosphorylation of RELA at 'Ser- 536'. May be involved in early neuronal development. This is Maturin (Mturn) from Mus musculus (Mouse).